A 144-amino-acid chain; its full sequence is Large ribosomal subunit protein uL15 (144 aa).

Positions 1–57 (MKLNDLSPAPGSRREKHRPGRGIGSGLGKTGGRGHKGQSSRSGGTIAPGFEGGQQPL) are disordered. Positions 21 to 31 (RGIGSGLGKTG) are enriched in gly residues.

The protein belongs to the universal ribosomal protein uL15 family. In terms of assembly, part of the 50S ribosomal subunit.

Binds to the 23S rRNA. The polypeptide is Large ribosomal subunit protein uL15 (Pseudomonas savastanoi pv. phaseolicola (strain 1448A / Race 6) (Pseudomonas syringae pv. phaseolicola (strain 1448A / Race 6))).